The primary structure comprises 217 residues: MSREMISIKGTRNGLVFFLDPTREFEEIKNTLLSKMESARGFFKGAKFSISHGQKDMPVEQKNELVNICRRYGLIPNNDDAAVPANAVSKASPRATRAASNSKPTIGENALMVRRSLRSGQCISYPGHVVVIGDVHPGAEVISGGNVLVMGSCRGLIHAGAGGNLMAKVVALRLAPTVLSIAGQRYAPEHPSAIPPGCQVARLSGQEIIFEKFQAAR.

It belongs to the MinC family. Interacts with MinD and FtsZ.

Functionally, cell division inhibitor that blocks the formation of polar Z ring septums. Rapidly oscillates between the poles of the cell to destabilize FtsZ filaments that have formed before they mature into polar Z rings. Prevents FtsZ polymerization. This Pelotomaculum thermopropionicum (strain DSM 13744 / JCM 10971 / SI) protein is Probable septum site-determining protein MinC.